Here is a 174-residue protein sequence, read N- to C-terminus: I-Kappa-B like protein C1 (174 aa).

ANK repeat units lie at residues 56–88 and 93–123; these read RGRQ…DINA and TGNS…NLGA.

It belongs to the polydnaviridae I-Kappa-B-like protein family.

Suppresses the host immune response through NF-kappa-B inactivation. Possesses ankyrin repeat domains required for NF-kappa-B binding but lacks the regulatory regions required for dissociation from NF-kappa-B and degradation. Therefore, prevents host NF-kappa-B release and subsequent activation. In Microplitis demolitor bracovirus (isolate Webb) (MdBV), this protein is I-Kappa-B like protein C1 (C1).